We begin with the raw amino-acid sequence, 539 residues long: T-complex protein 1 subunit zeta (539 aa).

It belongs to the TCP-1 chaperonin family. In terms of assembly, heterooligomeric complex of about 850 to 900 kDa that forms two stacked rings, 12 to 16 nm in diameter.

It is found in the cytoplasm. Functionally, molecular chaperone; assists the folding of proteins upon ATP hydrolysis. Known to play a role, in vitro, in the folding of actin and tubulin. The chain is T-complex protein 1 subunit zeta (cct-6) from Caenorhabditis elegans.